We begin with the raw amino-acid sequence, 187 residues long: Major allergen Equ c 1 (187 aa).

The or 16, or 21 signal peptide spans 1-15 (MKLLLLCLGLILVCA). Asparagine 53 and asparagine 68 each carry an N-linked (GlcNAc...) asparagine glycan. A disulfide bridge connects residues cysteine 83 and cysteine 176.

It belongs to the calycin superfamily. Lipocalin family. In terms of assembly, homodimer. Several N-terminal ends may be due to cleavage by signal peptidase at different sites or may be generated by proteolytic processing of the secreted protein. Post-translationally, analysis of the sugar composition shows the presence of GalNAc, Gal, NeuAc, GlcNAc, and Man. May be also O-glycosylated. Expressed in liver and in sublingual and submaxillary salivary glands. Highly concentrated in secretory fluid such as saliva and urine as well as in hair dandruff extract.

It is found in the secreted. The protein is Major allergen Equ c 1 of Equus caballus (Horse).